Consider the following 358-residue polypeptide: Stearoyl-CoA desaturase 2 (358 aa).

Topologically, residues 1-71 (MPAHILQEIS…EGPPPKLEYV (71 aa)) are cytoplasmic. Positions 14–43 (SATTTITAPPSGGQQNGGEKFEKNPHHWGA) are disordered. Positions 32-43 (EKFEKNPHHWGA) are enriched in basic and acidic residues. A helical membrane pass occupies residues 72 to 92 (WRNIVLMALLHIGALYGITLV). Asn74 is a binding site for substrate. Residues 93-96 (PSCK) are Lumenal-facing. The helical transmembrane segment at 97–117 (VYTCLFAYLYYVISALGITAG) threads the bilayer. Residues 118–216 (AHRLWSHRTY…EKLVMFQRRY (99 aa)) lie on the Cytoplasmic side of the membrane. Fe cation-binding residues include His119 and His124. The Histidine box-1 signature appears at 119–124 (HRLWSH). Positions 147, 154, and 155 each coordinate substrate. 3 residues coordinate Fe cation: His156, His159, and His160. Positions 156 to 160 (HRAHH) match the Histidine box-2 motif. Residues Arg187 and Lys188 each contribute to the substrate site. Residues 217-236 (YKPGLLLMCFILPTLVPWYC) traverse the membrane as a helical segment. The Lumenal portion of the chain corresponds to 237 to 240 (WGET). A helical membrane pass occupies residues 241-262 (FVNSLCVSTFLRYAVVLNATWL). Substrate is bound at residue Trp261. The Cytoplasmic portion of the chain corresponds to 263–358 (VNSAAHLYGY…RTGEESCKSG (96 aa)). The Fe cation site is built by His268, His297, His300, and His301. The Histidine box-3 signature appears at 297 to 301 (HNYHH).

Belongs to the fatty acid desaturase type 1 family. Requires Fe(2+) as cofactor. Detected in brain and adipose tissue, and at much lower levels in testis. Detected in liver when rats are kept on a fat-free diet, but not when their food contains unsaturated fatty acids.

Its subcellular location is the endoplasmic reticulum membrane. It localises to the microsome membrane. The catalysed reaction is octadecanoyl-CoA + 2 Fe(II)-[cytochrome b5] + O2 + 2 H(+) = (9Z)-octadecenoyl-CoA + 2 Fe(III)-[cytochrome b5] + 2 H2O. It carries out the reaction hexadecanoyl-CoA + 2 Fe(II)-[cytochrome b5] + O2 + 2 H(+) = (9Z)-hexadecenoyl-CoA + 2 Fe(III)-[cytochrome b5] + 2 H2O. In terms of biological role, stearoyl-CoA desaturase that utilizes O(2) and electrons from reduced cytochrome b5 to introduce the first double bond into saturated fatty acyl-CoA substrates. Catalyzes the insertion of a cis double bond at the delta-9 position into fatty acyl-CoA substrates including palmitoyl-CoA and stearoyl-CoA. Gives rise to a mixture of 16:1 and 18:1 unsaturated fatty acids. Contributes to the biosynthesis of membrane phospholipids, cholesterol esters and triglycerides, especially during embryonic development and in neonates. Important for normal permeability barrier function of the skin in neonates. The chain is Stearoyl-CoA desaturase 2 (Scd2) from Rattus norvegicus (Rat).